The following is an 880-amino-acid chain: Valine--tRNA ligase (880 aa).

A 'HIGH' region motif is present at residues 51–61 (PNVTGELHLGH). Residues 529 to 533 (KMSKT) carry the 'KMSKS' region motif. Lys-532 is a binding site for ATP. Residues 815–854 (MSTMVDLEVEAKRVKAEISELEIQIERLSTRLSDEQFLAK) adopt a coiled-coil conformation.

Belongs to the class-I aminoacyl-tRNA synthetase family. ValS type 1 subfamily. Monomer.

It localises to the cytoplasm. It catalyses the reaction tRNA(Val) + L-valine + ATP = L-valyl-tRNA(Val) + AMP + diphosphate. Its function is as follows. Catalyzes the attachment of valine to tRNA(Val). As ValRS can inadvertently accommodate and process structurally similar amino acids such as threonine, to avoid such errors, it has a 'posttransfer' editing activity that hydrolyzes mischarged Thr-tRNA(Val) in a tRNA-dependent manner. The polypeptide is Valine--tRNA ligase (Dehalococcoides mccartyi (strain CBDB1)).